A 353-amino-acid polypeptide reads, in one-letter code: Putative glycosyltransferase TagX (353 aa).

This sequence belongs to the glycosyltransferase 2 family.

The protein is Putative glycosyltransferase TagX (tagX) of Staphylococcus aureus (strain Mu50 / ATCC 700699).